A 1186-amino-acid chain; its full sequence is ATP-dependent helicase/nuclease subunit A (1186 aa).

One can recognise a UvrD-like helicase ATP-binding domain in the interval 2-460 (NFSKNQRAVI…IELSENYRSQ (459 aa)). Position 23-30 (23-30 (ASAGSGKT)) interacts with ATP. The 285-residue stretch at 487–771 (DVELKAANRD…SVMTIHAAKG (285 aa)) folds into the UvrD-like helicase C-terminal domain.

This sequence belongs to the helicase family. AddA subfamily. As to quaternary structure, heterodimer of AddA and AddB/RexB. Requires Mg(2+) as cofactor.

The catalysed reaction is Couples ATP hydrolysis with the unwinding of duplex DNA by translocating in the 3'-5' direction.. The enzyme catalyses ATP + H2O = ADP + phosphate + H(+). Functionally, the heterodimer acts as both an ATP-dependent DNA helicase and an ATP-dependent, dual-direction single-stranded exonuclease. Recognizes the chi site generating a DNA molecule suitable for the initiation of homologous recombination. The AddA nuclease domain is required for chi fragment generation; this subunit has the helicase and 3' -&gt; 5' nuclease activities. This chain is ATP-dependent helicase/nuclease subunit A, found in Oenococcus oeni (strain ATCC BAA-331 / PSU-1).